The following is a 708-amino-acid chain: Ubiquitin thioesterase Zranb1 (708 aa).

The RanBP2-type 1 zinc-finger motif lies at 3–33 (EHGIKWACEYCTYENWPSAIKCTMCRAQRPS). The Zn(2+) site is built by Cys10, Cys13, Cys24, and Cys27. A disordered region spans residues 38–73 (TEDPFKSGSSDVGRDWDPSSTEGGSSPLICPDSSAR). 2 consecutive RanBP2-type zinc fingers follow at residues 84-113 (NANK…QRRT) and 149-178 (RTQH…PRPN). Zn(2+)-binding residues include Cys90, Cys93, Cys104, Cys107, Cys155, Cys158, Cys169, and Cys172. The interval 202 to 224 (RWRGGCSSGNSQRRSPPTTKRDS) is disordered. The span at 209–219 (SGNSQRRSPPT) shows a compositional bias: polar residues. 2 ANK repeats span residues 260–290 (KKTD…SGGD) and 313–340 (YTLV…QQAA). An OTU domain is found at 432–592 (LYALWNRTAG…RGHFSALVAM (161 aa)). The Nucleophile role is filled by Cys443. The active-site Proton acceptor is His585.

It belongs to the peptidase C64 family. As to quaternary structure, interacts with TRAF6. Interacts with APC.

The protein resides in the cytoplasm. It localises to the nucleus. It catalyses the reaction Thiol-dependent hydrolysis of ester, thioester, amide, peptide and isopeptide bonds formed by the C-terminal Gly of ubiquitin (a 76-residue protein attached to proteins as an intracellular targeting signal).. In terms of biological role, ubiquitin thioesterase, which specifically hydrolyzes 'Lys-29'-linked and 'Lys-33'-linked diubiquitin. Also cleaves 'Lys-63'-linked chains, but with 40-fold less efficiency compared to 'Lys-29'-linked ones. Positive regulator of the Wnt signaling pathway that deubiquitinates APC protein, a negative regulator of Wnt-mediated transcription. Acts as a regulator of autophagy by mediating deubiquitination of PIK3C3/VPS34, thereby promoting autophagosome maturation. Plays a role in the regulation of cell morphology and cytoskeletal organization. Required in the stress fiber dynamics and cell migration. In Mus musculus (Mouse), this protein is Ubiquitin thioesterase Zranb1.